A 407-amino-acid polypeptide reads, in one-letter code: Argininosuccinate synthase (407 aa).

ATP contacts are provided by residues 13–21 (AYSGGLDTS) and A40. L-citrulline contacts are provided by Y91 and S96. G121 lines the ATP pocket. L-aspartate-binding residues include T123, N127, and D128. N127 is a binding site for L-citrulline. R131, S182, S191, E267, and Y279 together coordinate L-citrulline.

This sequence belongs to the argininosuccinate synthase family. Type 1 subfamily. In terms of assembly, homotetramer.

It is found in the cytoplasm. The catalysed reaction is L-citrulline + L-aspartate + ATP = 2-(N(omega)-L-arginino)succinate + AMP + diphosphate + H(+). Its pathway is amino-acid biosynthesis; L-arginine biosynthesis; L-arginine from L-ornithine and carbamoyl phosphate: step 2/3. This is Argininosuccinate synthase from Mesorhizobium japonicum (strain LMG 29417 / CECT 9101 / MAFF 303099) (Mesorhizobium loti (strain MAFF 303099)).